The sequence spans 164 residues: Probable calcium-binding protein CML17 (164 aa).

EF-hand domains are found at residues 4–39, 40–75, 88–123, and 126–161; these read DQQAELRRVFELFDRDGDGRITREELTESLERLGMP, VHREELAATIARIDANGDGCVDMDEFTQLYETVMRV, VDEASMREAFDVFDRNGDGFITVDELGAVLASLGIK, and RTAEDCGRMIGQVDRDGDGRVDFLEFKQMMRGGAFA. Ca(2+)-binding residues include aspartate 17, aspartate 19, aspartate 21, arginine 23, glutamate 28, aspartate 53, asparagine 55, aspartate 57, cysteine 59, glutamate 64, aspartate 101, asparagine 103, aspartate 105, glutamate 112, aspartate 139, aspartate 141, aspartate 143, arginine 145, and glutamate 150.

Functionally, potential calcium sensor. This Oryza sativa subsp. japonica (Rice) protein is Probable calcium-binding protein CML17 (CML17).